A 196-amino-acid polypeptide reads, in one-letter code: Potassium-transporting ATPase KdpC subunit (196 aa).

Residues 7–27 form a helical membrane-spanning segment; it reads PALVLFFVLTLLTGVAYPLAV.

It belongs to the KdpC family. The system is composed of three essential subunits: KdpA, KdpB and KdpC.

The protein localises to the cell inner membrane. Its function is as follows. Part of the high-affinity ATP-driven potassium transport (or Kdp) system, which catalyzes the hydrolysis of ATP coupled with the electrogenic transport of potassium into the cytoplasm. This subunit acts as a catalytic chaperone that increases the ATP-binding affinity of the ATP-hydrolyzing subunit KdpB by the formation of a transient KdpB/KdpC/ATP ternary complex. This Polaromonas naphthalenivorans (strain CJ2) protein is Potassium-transporting ATPase KdpC subunit.